Here is a 149-residue protein sequence, read N- to C-terminus: Oocyte-expressed protein homolog (149 aa).

The segment at 1–22 (MVDDAGAAESQRGKQTPAHSLE) is disordered. The region spanning 49–110 (PLVFYLEAWL…RVQNRVKSML (62 aa)) is the KH; atypical domain.

It belongs to the KHDC1 family. Component of the subcortical maternal complex (SCMC), at least composed of NLRP5, KHDC3L, OOEP, and TLE6 isoform 1. Within the complex, interacts with NLRP5, KHDC3L and TLE6 isoform 1. As part of the SCMC interacts with the SCMC-associated protein NLRP4F. The SCMC may facilitate translocation of its components between the nuclear and cytoplasmic compartments. Forms a scaffold complex with KHDC3L/FILIA, and interacts with BLM and TRIM25 at DNA replication forks.

It is found in the cytoplasm. The protein localises to the nucleus. Component of the subcortical maternal complex (SCMC), a multiprotein complex that plays a key role in early embryonic development. The SCMC complex is a structural constituent of cytoplasmic lattices, which consist in fibrous structures found in the cytoplasm of oocytes and preimplantation embryos. They are required to store maternal proteins critical for embryonic development, such as proteins that control epigenetic reprogramming of the preimplantation embryo, and prevent their degradation or activation. As part of the OOEP-KHDC3 scaffold, recruits BLM and TRIM25 to DNA replication forks, thereby promoting the ubiquitination of BLM by TRIM25, enhancing BLM retainment at replication forks and therefore promoting stalled replication fork restart. Positively regulates the homologous recombination-mediated DNA double-strand break (DSB) repair pathway by regulating ATM activation and RAD51 recruitment to DSBs in oocytes. Thereby contributes to oocyte survival and the resumption and completion of meiosis. The sequence is that of Oocyte-expressed protein homolog from Homo sapiens (Human).